Consider the following 98-residue polypeptide: Lactococcin-A immunity protein (98 aa).

In terms of biological role, imparts immunity to lactococcin-A to naturally sensitive host strains. The polypeptide is Lactococcin-A immunity protein (lciA) (Lactococcus lactis subsp. cremoris (Streptococcus cremoris)).